The sequence spans 226 residues: Uracil-DNA glycosylase (226 aa).

The active-site Proton acceptor is the Asp64.

It belongs to the uracil-DNA glycosylase (UDG) superfamily. UNG family.

The protein resides in the cytoplasm. It catalyses the reaction Hydrolyzes single-stranded DNA or mismatched double-stranded DNA and polynucleotides, releasing free uracil.. Excises uracil residues from the DNA which can arise as a result of misincorporation of dUMP residues by DNA polymerase or due to deamination of cytosine. The sequence is that of Uracil-DNA glycosylase from Photorhabdus laumondii subsp. laumondii (strain DSM 15139 / CIP 105565 / TT01) (Photorhabdus luminescens subsp. laumondii).